The primary structure comprises 1409 residues: DNA-directed RNA polymerase subunit beta' (1409 aa).

4 residues coordinate Zn(2+): C72, C74, C87, and C90. Mg(2+) is bound by residues D462, D464, and D466. Positions 816, 890, 897, and 900 each coordinate Zn(2+).

It belongs to the RNA polymerase beta' chain family. As to quaternary structure, the RNAP catalytic core consists of 2 alpha, 1 beta, 1 beta' and 1 omega subunit. When a sigma factor is associated with the core the holoenzyme is formed, which can initiate transcription. The cofactor is Mg(2+). Zn(2+) serves as cofactor.

The enzyme catalyses RNA(n) + a ribonucleoside 5'-triphosphate = RNA(n+1) + diphosphate. Functionally, DNA-dependent RNA polymerase catalyzes the transcription of DNA into RNA using the four ribonucleoside triphosphates as substrates. This is DNA-directed RNA polymerase subunit beta' from Aromatoleum aromaticum (strain DSM 19018 / LMG 30748 / EbN1) (Azoarcus sp. (strain EbN1)).